The following is a 202-amino-acid chain: Interleukin-17D (202 aa).

Positions 1 to 15 (MLVAGFLLALPPSWA) are cleaved as a signal peptide. Positions 65–85 (QARNASCPAGGRPADRRFRPP) are disordered. N-linked (GlcNAc...) asparagine glycans are attached at residues N68 and N181.

This sequence belongs to the IL-17 family. In terms of tissue distribution, expressed preferentially in adipose, skeletal muscle and CNS.

It localises to the secreted. Functionally, induces expression of IL6, CXCL8/IL8, and CSF2/GM-CSF from endothelial cells. The protein is Interleukin-17D (IL17D) of Homo sapiens (Human).